The chain runs to 299 residues: Taste receptor type 2 member 16 (299 aa).

The Extracellular segment spans residues 1–5 (MVPTQ). Residues 6-26 (VTIFSIIMYVLESLVIIVQSC) traverse the membrane as a helical segment. The Cytoplasmic segment spans residues 27 to 47 (TTVAVLFREWMHFQRLSPVET). The chain crosses the membrane as a helical span at residues 48–68 (ILISLGISHFCLQWTSMLYNF). At 69 to 82 (GTYSRPVLLFWKVS) the chain is on the extracellular side. A helical membrane pass occupies residues 83–103 (VVWEFMNILTFWLTSWLAVLY). The Cytoplasmic segment spans residues 104 to 125 (CVKVSSFTHPIFLWLRMKILKL). Residues 126-146 (VLWLILGALIASCLSIIPSVV) form a helical membrane-spanning segment. Residues 147-183 (KYHIQMELVTLDNLPKNNSLILRLQQFEWYFSNPLKM) lie on the Extracellular side of the membrane. N-linked (GlcNAc...) asparagine glycosylation occurs at Asn163. Residues 184 to 204 (IGFGIPFFVFLASIILLTVSL) form a helical membrane-spanning segment. Residues 205–233 (VQHWVQMKHYSSSNSSLKAQFTVLKSLAT) lie on the Cytoplasmic side of the membrane. A helical transmembrane segment spans residues 234–254 (FFTFFTSYFLTIVISFIGTVF). At 255–258 (DKKS) the chain is on the extracellular side. The chain crosses the membrane as a helical span at residues 259-279 (WFWVCEAVIYGLVCIHFTSLM). Over 280-299 (MSNPALKKALKLQFWSPEPS) the chain is Cytoplasmic.

Belongs to the G-protein coupled receptor T2R family. In terms of assembly, interacts with RTP3 and RTP4.

It is found in the cell membrane. Gustducin-coupled receptor implicated in the perception of bitter compounds in the oral cavity and the gastrointestinal tract. Signals through PLCB2 and the calcium-regulated cation channel TRPM5. The sequence is that of Taste receptor type 2 member 16 (Tas2r16) from Mus musculus (Mouse).